The primary structure comprises 181 residues: Caveolin-1 (181 aa).

Topologically, residues 1 to 107 (MTGGLRDGEK…TKYWCYRLLT (107 aa)) are cytoplasmic. An intramembrane region (helical) is located at residues 108-128 (ALVGIPLALIWGIFFAILSFI). Topologically, residues 129-181 (HIWAVVPCVKSYLIEIHCISRVYSICVHTFCDPLFEAMGKCLGGVRIRTSKEV) are cytoplasmic. S-palmitoyl cysteine attachment occurs at residues C136, C146, and C159.

The protein belongs to the caveolin family. As to quaternary structure, homooligomer.

It localises to the golgi apparatus membrane. The protein resides in the cell membrane. Its subcellular location is the membrane. The protein localises to the caveola. It is found in the membrane raft. May act as a positive regulator of T-cell coactivation. May act as a scaffolding protein within caveolar membranes. Interacts directly with G-protein alpha subunits and can functionally regulate their activity. The chain is Caveolin-1 (cav1) from Takifugu rubripes (Japanese pufferfish).